Reading from the N-terminus, the 171-residue chain is Neudesin (171 aa).

An N-terminal signal peptide occupies residues 1–30 (MARPAPWWWLRPLAALALALALVRVPSARA). The Cytochrome b5 heme-binding domain maps to 43–128 (VRLFTEEELA…KELEALDDIF (86 aa)). Lysine 135 is modified (N6-acetyllysine). The segment at 151-171 (GSPNLDFKPEDQPHFDIKDEF) is disordered. A compositionally biased stretch (basic and acidic residues) spans 157 to 171 (FKPEDQPHFDIKDEF).

It belongs to the cytochrome b5 family. MAPR subfamily. Interacts with PINK1 and PARK7.

It localises to the secreted. The protein localises to the extracellular space. It is found in the mitochondrion. Its subcellular location is the endoplasmic reticulum. Acts as a neurotrophic factor in postnatal mature neurons enhancing neuronal survival. Promotes cell proliferation and neurogenesis in undifferentiated neural progenitor cells at the embryonic stage and inhibits differentiation of astrocytes. Its neurotrophic activity is exerted via MAPK1/ERK2, MAPK3/ERK1 and AKT1/AKT pathways. Neurotrophic activity is enhanced by binding to heme. Also acts as an anorexigenic neurotrophic factor that contributes to energy balance. The chain is Neudesin from Rattus norvegicus (Rat).